The chain runs to 407 residues: MSIENKNTGVKKVVLAYSGGLDTSAIIPWLKENYDNCEIIAFCADVGQGEEELIGLTEKALASGASECHIVDLKEEFVKDYIYPTMATGAIYEGTYLLGTSMARPIIAKAQVEVARKVGADALCHGCTGKGNDQVRFEGCFAALAPDLKVIAPWREWTMQSREDLLAYLAERNIKTSASATKIYSRDANAFHISHEGGELEDPWNEPSKGVWTLTADPEDAPNQAEYVSLEVENGRVTKVNGEALTPYAALMKLNAIAAPHGVGRIDITENRLVGMKSRGCYETPGGTVMFAALRAIEELVLDKTSRNWREQVGAQMAHLVYDGRWFTPLCKSLLAASESLAESVNGEVVVKLYKGHAIAVKKRSPNSLYSEAFATFGEDQVYDQKHAEGFIRLYSLASRIRALNAK.

ATP is bound by residues 16-24 and A44; that span reads AYSGGLDTS. Residues Y96 and S101 each coordinate L-citrulline. Residue G126 participates in ATP binding. L-aspartate contacts are provided by T128, N132, and D133. N132 is an L-citrulline binding site. 5 residues coordinate L-citrulline: R136, S185, S194, E270, and Y282.

It belongs to the argininosuccinate synthase family. Type 1 subfamily. As to quaternary structure, homotetramer.

The protein resides in the cytoplasm. It catalyses the reaction L-citrulline + L-aspartate + ATP = 2-(N(omega)-L-arginino)succinate + AMP + diphosphate + H(+). Its pathway is amino-acid biosynthesis; L-arginine biosynthesis; L-arginine from L-ornithine and carbamoyl phosphate: step 2/3. The sequence is that of Argininosuccinate synthase from Shewanella oneidensis (strain ATCC 700550 / JCM 31522 / CIP 106686 / LMG 19005 / NCIMB 14063 / MR-1).